Reading from the N-terminus, the 176-residue chain is 2-C-methyl-D-erythritol 2,4-cyclodiphosphate synthase (176 aa).

A divalent metal cation-binding residues include Asp23, His25, and His60. 23 to 25 (DSH) contacts 4-CDP-2-C-methyl-D-erythritol 2-phosphate. 149–152 (TSGE) serves as a coordination point for 4-CDP-2-C-methyl-D-erythritol 2-phosphate.

Belongs to the IspF family. As to quaternary structure, homotrimer. A divalent metal cation serves as cofactor.

The catalysed reaction is 4-CDP-2-C-methyl-D-erythritol 2-phosphate = 2-C-methyl-D-erythritol 2,4-cyclic diphosphate + CMP. It participates in isoprenoid biosynthesis; isopentenyl diphosphate biosynthesis via DXP pathway; isopentenyl diphosphate from 1-deoxy-D-xylulose 5-phosphate: step 4/6. In terms of biological role, involved in the biosynthesis of isopentenyl diphosphate (IPP) and dimethylallyl diphosphate (DMAPP), two major building blocks of isoprenoid compounds. Catalyzes the conversion of 4-diphosphocytidyl-2-C-methyl-D-erythritol 2-phosphate (CDP-ME2P) to 2-C-methyl-D-erythritol 2,4-cyclodiphosphate (ME-CPP) with a corresponding release of cytidine 5-monophosphate (CMP). In Chlamydia abortus (strain DSM 27085 / S26/3) (Chlamydophila abortus), this protein is 2-C-methyl-D-erythritol 2,4-cyclodiphosphate synthase.